The following is an 88-amino-acid chain: Small ribosomal subunit protein uS15 (88 aa).

This sequence belongs to the universal ribosomal protein uS15 family. In terms of assembly, part of the 30S ribosomal subunit. Forms a bridge to the 50S subunit in the 70S ribosome, contacting the 23S rRNA.

Functionally, one of the primary rRNA binding proteins, it binds directly to 16S rRNA where it helps nucleate assembly of the platform of the 30S subunit by binding and bridging several RNA helices of the 16S rRNA. In terms of biological role, forms an intersubunit bridge (bridge B4) with the 23S rRNA of the 50S subunit in the ribosome. This Thermoanaerobacter pseudethanolicus (strain ATCC 33223 / 39E) (Clostridium thermohydrosulfuricum) protein is Small ribosomal subunit protein uS15.